Reading from the N-terminus, the 1037-residue chain is Receptor kinase-like protein Xa21 (1037 aa).

An N-terminal signal peptide occupies residues 1–24; sequence MARSPTSVMISSLLLLLLIGPASS. The Extracellular portion of the chain corresponds to 25 to 665; that stretch reads DDAAAAAAAR…LLENRKHFPV (641 aa). N-linked (GlcNAc...) asparagine glycosylation is found at N66, N101, and N112. 11 LRR repeats span residues 89–112, 113–137, 138–161, 163–185, 187–210, 211–234, 236–259, 260–283, 285–308, 310–331, and 333–355; these read PHRVVKLLLRSSNLSGIISPSLGN, LSFLRELDLSDNYLSGEIPPELSRL, SRLQLLELSGNSIQGSIPAAIGAC, KLTSLDLSHNQLRGMIPREIGAS, KHLSNLYLHTNGLSGEIPSALGNL, TSLQYFDLSCNRLSGAIPSSLGQL, SSLLTMNLRQNNLSGMIPNSIWNL, SSLRAFSVSENKLGGMIPTNAFKT, HLLEVIDMGTNRFYGKIPASVANA, HLTQLQIDGNLFSGIITSGFGR, and RNLTTLYLWRNLFQTREQEDWGF. N209 carries N-linked (GlcNAc...) asparagine glycosylation. N247 and N258 each carry an N-linked (GlcNAc...) asparagine glycan. N307 carries an N-linked (GlcNAc...) asparagine glycan. N-linked (GlcNAc...) asparagine glycosylation is found at N334, N361, and N385. LRR repeat units lie at residues 362-385, 387-411, 412-435, 437-459, 460-482, 483-507, 509-532, 533-556, 557-580, 581-604, and 606-629; these read CSKLQTLDLGENNLGGVLPNSFSN, STSLSFLALDLNKITGSIPKDIGNL, IGLQHLYLCNNNFRGSLPSSLGRL, NLGILVAYENNLSGSIPLAIGNL, TELNILLLGTNKFSGWIPYTLSN, LTNLLSLGLSTNNLSGPIPSELFNI, TLSIMINVSKNNLEGSIPQEIGHL, KNLVEFHAESNRLSGKIPNTLGDC, QLLRYLYLQNNLLSGSIPSALGQL, KGLETLDLSSNNLSGQIPTSLADI, and MLHSLNLSFNSFMGEVPTIGAFAD. Residues N447, N458, N482, N495, and N515 are each glycosylated (N-linked (GlcNAc...) asparagine). 2 N-linked (GlcNAc...) asparagine glycosylation sites follow: N592 and N611. The helical transmembrane segment at 666 to 686 threads the bilayer; that stretch reads LPISVSLVAALAILSSLYLLI. Over 687–1037 the chain is Cytoplasmic; the sequence is TWHKRTKKGA…PVCEGASLEF (351 aa). Positions 689-694 match the Nuclear localization signal motif; the sequence is HKRTKK. S698 is modified (phosphoserine). T700 is subject to Phosphothreonine. S701 is modified (phosphoserine). At T717 the chain carries Phosphothreonine. One can recognise a Protein kinase domain in the interval 720-1019; that stretch reads FAPTNLLGSG…GDIIDELNAI (300 aa). ATP contacts are provided by residues 726-734 and K748; that span reads LGSGSFGSV. Catalysis depends on D854, which acts as the Proton acceptor.

It belongs to the protein kinase superfamily. Ser/Thr protein kinase family. Interacts with WRKY62/XB10 in the nucleus. Interacts with SERK2. Requires Mn(2+) as cofactor. Mg(2+) serves as cofactor. Post-translationally, undergoes protein cleavage upon X.oryzae pv. oryzae protein Ax21 detection, thus releasing the processed protein kinase Xa21 chain. In terms of processing, autophosphorylated on serine and threonine residues; these phosphorylation prevents proteolytic degradation.

The protein resides in the cell membrane. The protein localises to the endoplasmic reticulum membrane. Its subcellular location is the nucleus. It catalyses the reaction L-seryl-[protein] + ATP = O-phospho-L-seryl-[protein] + ADP + H(+). The catalysed reaction is L-threonyl-[protein] + ATP = O-phospho-L-threonyl-[protein] + ADP + H(+). Its function is as follows. Receptor kinase that detects X.oryzae pv. oryzae protein Ax21 to promote innate immunity. Following X.oryzae pv. oryzae protein Ax21 detection, undergoes cleavage, releasing the processed protein kinase Xa21 chain. In terms of biological role, the processed protein kinase Xa21 chain released by protein cleavage after X.oryzae pv. oryzae protein Ax21 detection translocates into the nucleus where it can bind and regulate WRKY62, a transcription factor. Confers resistance to the bacterial pathogen X.oryzae pv. oryzae (Xoo). In Oryza sativa subsp. japonica (Rice), this protein is Receptor kinase-like protein Xa21.